Here is an 889-residue protein sequence, read N- to C-terminus: MKNPFAHLAEPLDPAQPGKKFFNLNKLEDSRYGRLPFSIRVLLEAAVRNCDEFLVKKNDIENILNWSIMQHKSIEVPFKPARVILQDFTGVPAVVDFAAMRDAVKKLGGNPEKINPVCPADLVIDHSIQVHFNRRADSLQKNQDLEFERNRERFEFLKWGSQAFCNMRIIPPGSGIIHQVNLEYLARVVFDQDGCYYPDSLVGTDSHTTMIDGLGVLGWGVGGIEAEAVMLGQPISMVLPQVIGYKLMGKPHPLVTSTDIVLTITKHLRQVGVVGKFVEFFGPGVAQLSIADRATIANMCPEYGATAAFFPVDDVSIAYLVQTGREEDKVKHIKRYLQAVGMFRDFSDSSQDPDFTQVVELDLKTVVPCCSGPKRPQDKVAVSEIEKDFESCLGAKQGFKGFQVAPDHHNDHKTFIYNDSEFTLAHGSVVIAAITSCTNTSNPSVMLGAGLLAKKAVEAGLNVKPYVKTSLSPGSGVVTYYLRESGVMPYLSQLGFDVVGYGCMTCIGNSGPLPEPVVEAITQGDLVAVGVLSGNRNFEGRVHPNTRANYLASPPLVIAYAIAGTVRIDFEKEPLGVNAQGQQVFLKDIWPTRDEIQEVERKYVIPGMFKEVYQKIETVNKSWNALAAPSEKLYAWNPKSTYIKSPPFFESLTLDLQPPKSIVDAYVLLNLGDSVTTDHISPAGNIARNSPAARYLTNRGLTPRDFNSYGSRRGNDAIMARGTFANIRLLNKFLNKQAPQTVHLPSGETLDVFDAAERYQQAGLPLIVLAGKEYGSGSSRDWAAKGPFLLGIKAVLAESYERTHCSNLVGMGVIPLEYLPGETADSLGLTGRERYTIHIPEHLKPRMKVQIKLDTGKTFQAVMRFDTDVELTYFHNGGILNYMIRKMAQ.

Substrate is bound by residues Q86 and 205–207 (DSH). [4Fe-4S] cluster-binding residues include C437, C503, and C506. Residues R536, R541, R699, and 779–780 (SR) contribute to the substrate site.

It belongs to the aconitase/IPM isomerase family. In terms of assembly, interacts (when associated with the 4Fe-4S) with FBXL5. Interacts with frataxin(81-210). Requires [4Fe-4S] cluster as cofactor.

It localises to the cytoplasm. Its subcellular location is the cytosol. It carries out the reaction citrate = D-threo-isocitrate. Its function is as follows. Bifunctional iron sensor that switches between 2 activities depending on iron availability. Iron deprivation, promotes its mRNA binding activity through which it regulates the expression of genes involved in iron uptake, sequestration and utilization. Binds to iron-responsive elements (IRES) in the untranslated region of target mRNAs preventing for instance the translation of ferritin and aminolevulinic acid synthase and stabilizing the transferrin receptor mRNA. In terms of biological role, conversely, when cellular iron levels are high, binds a 4Fe-4S cluster which precludes RNA binding activity and promotes the aconitase activity, the isomerization of citrate to isocitrate via cis-aconitate. In Rattus norvegicus (Rat), this protein is Cytoplasmic aconitate hydratase (Aco1).